The primary structure comprises 380 residues: Endopolygalacturonase AN8327 (380 aa).

Residues 1-19 (MFYALGPLALFAFATEVMA) form the signal peptide. Residues 20–35 (TPVAYPMTTASPTLAK) constitute a propeptide that is removed on maturation. Cysteines 39 and 57 form a disulfide. 7 PbH1 repeats span residues 147-169 (LTDS…SING), 170-200 (CDGL…DIGE), 201-222 (SSNV…AVNS), 223-243 (GTSI…SIGS), 252-273 (VDTV…RIKA), 281-303 (IKGV…LIEQ), and 315-338 (TSGI…DSDG). The active-site Proton donor is Asp-215. Cys-217 and Cys-233 are joined by a disulfide. The active site involves His-237. N-linked (GlcNAc...) asparagine glycosylation is present at Asn-327. The cysteines at positions 345 and 350 are disulfide-linked. N-linked (GlcNAc...) asparagine glycosylation occurs at Asn-352. An intrachain disulfide couples Cys-369 to Cys-378.

It belongs to the glycosyl hydrolase 28 family.

Its subcellular location is the secreted. It catalyses the reaction (1,4-alpha-D-galacturonosyl)n+m + H2O = (1,4-alpha-D-galacturonosyl)n + (1,4-alpha-D-galacturonosyl)m.. In terms of biological role, involved in maceration and soft-rotting of plant tissue. Hydrolyzes the 1,4-alpha glycosidic bonds of de-esterified pectate in the smooth region of the plant cell wall. The chain is Endopolygalacturonase AN8327 from Emericella nidulans (strain FGSC A4 / ATCC 38163 / CBS 112.46 / NRRL 194 / M139) (Aspergillus nidulans).